A 127-amino-acid polypeptide reads, in one-letter code: Ribonuclease P protein component (127 aa).

The protein belongs to the RnpA family. As to quaternary structure, consists of a catalytic RNA component (M1 or rnpB) and a protein subunit.

It carries out the reaction Endonucleolytic cleavage of RNA, removing 5'-extranucleotides from tRNA precursor.. Functionally, RNaseP catalyzes the removal of the 5'-leader sequence from pre-tRNA to produce the mature 5'-terminus. It can also cleave other RNA substrates such as 4.5S RNA. The protein component plays an auxiliary but essential role in vivo by binding to the 5'-leader sequence and broadening the substrate specificity of the ribozyme. The protein is Ribonuclease P protein component of Rippkaea orientalis (strain PCC 8801 / RF-1) (Cyanothece sp. (strain PCC 8801)).